The sequence spans 537 residues: Periplasmic murein peptide-binding protein MppA (537 aa).

The first 22 residues, 1 to 22 (MKHSVSVTCCALLVSSISLSYA), serve as a signal peptide directing secretion. Residues Lys-42, Val-54, Leu-56, Gln-289, Arg-424, Ser-435, Val-437, Asp-439, and Thr-506 each contribute to the L-alanyl-gamma-D-glutamyl-meso-2,6-diaminopimelate site.

This sequence belongs to the bacterial solute-binding protein 5 family. In terms of assembly, the complex is composed of two ATP-binding proteins (OppD and OppF), two transmembrane proteins (OppB and OppC) and a solute-binding protein (MppA).

It localises to the periplasm. Part of the ABC transporter complex MppA-OppBCDF involved in the uptake of the cell wall murein tripeptide L-alanyl-gamma-D-glutamyl-meso-diaminopimelate. Is involved in the recycling of cell wall peptides. Binds the cell wall peptide L-Ala-D-Gly-gamma-meso-diaminopimelic acid. Can also transport ordinary alpha-linked tripeptides such as Pro-Phe-Lys, but with much lower efficiency than OppA. Cannot bind typical tripeptides such as Lys-Glu-Lys, Lys-Lys-Lys or Ala-Ala-Ala. The polypeptide is Periplasmic murein peptide-binding protein MppA (Escherichia coli (strain K12)).